We begin with the raw amino-acid sequence, 263 residues long: Aquaporin Lacbi1:233199 (263 aa).

Topologically, residues 1-17 (MFTLAHHRHAIRKPMAE) are cytoplasmic. The helical transmembrane segment at 18 to 38 (FFGVALLVIFGAGAACQVVLS) threads the bilayer. At 39-44 (TNPNSF) the chain is on the extracellular side. A helical transmembrane segment spans residues 45–65 (LSINFGWAIGIAMGAWISGSI). Residues 66-88 (SGGHINPAITIAMATYRGFPWRE) lie on the Cytoplasmic side of the membrane. An NPA 1 motif is present at residues 71 to 73 (NPA). The chain crosses the membrane as a helical span at residues 89–109 (VPSYILAQVLGGVVGAALVYA). Topologically, residues 110–143 (NYIHAIDVFEGGRHIRTQATASLFATYALPYMTQ) are extracellular. Residues 144 to 164 (VSCFFSEFLATAVLAMMVLAL) form a helical membrane-spanning segment. Over 165 to 174 (TDNRNGAPTN) the chain is Cytoplasmic. Residues 175-195 (GLSPFALFVLFIGLGASLGME) form a helical membrane-spanning segment. Over 196 to 227 (TAYALNPARDFGPRLFLAMAGYGKALFNYRSQ) the chain is Extracellular. The NPA 2 signature appears at 201-203 (NPA). A helical membrane pass occupies residues 228 to 248 (YWLWAPIIAPVLGAQAGGLLY). Topologically, residues 249-263 (DTFLYDGDDSPIKWR) are cytoplasmic.

Belongs to the MIP/aquaporin (TC 1.A.8) family.

The protein localises to the membrane. It carries out the reaction H2O(in) = H2O(out). Functionally, probable water channel required to facilitate the transport of water across membranes. The chain is Aquaporin Lacbi1:233199 from Laccaria bicolor (strain S238N-H82 / ATCC MYA-4686) (Bicoloured deceiver).